The sequence spans 124 residues: Holo-[acyl-carrier-protein] synthase (124 aa).

Residues D7 and E55 each contribute to the Mg(2+) site.

The protein belongs to the P-Pant transferase superfamily. AcpS family. Mg(2+) is required as a cofactor.

The protein localises to the cytoplasm. It carries out the reaction apo-[ACP] + CoA = holo-[ACP] + adenosine 3',5'-bisphosphate + H(+). Its function is as follows. Transfers the 4'-phosphopantetheine moiety from coenzyme A to a Ser of acyl-carrier-protein. This Borreliella afzelii (strain PKo) (Borrelia afzelii) protein is Holo-[acyl-carrier-protein] synthase.